The chain runs to 163 residues: 6,7-dimethyl-8-ribityllumazine synthase (163 aa).

5-amino-6-(D-ribitylamino)uracil is bound by residues F27, 58 to 60, and 87 to 89; these read ALE and CVI. 92-93 lines the (2S)-2-hydroxy-3-oxobutyl phosphate pocket; that stretch reads DT. The active-site Proton donor is the H95. N120 contacts 5-amino-6-(D-ribitylamino)uracil. Residue R134 coordinates (2S)-2-hydroxy-3-oxobutyl phosphate.

This sequence belongs to the DMRL synthase family.

The catalysed reaction is (2S)-2-hydroxy-3-oxobutyl phosphate + 5-amino-6-(D-ribitylamino)uracil = 6,7-dimethyl-8-(1-D-ribityl)lumazine + phosphate + 2 H2O + H(+). The protein operates within cofactor biosynthesis; riboflavin biosynthesis; riboflavin from 2-hydroxy-3-oxobutyl phosphate and 5-amino-6-(D-ribitylamino)uracil: step 1/2. Functionally, catalyzes the formation of 6,7-dimethyl-8-ribityllumazine by condensation of 5-amino-6-(D-ribitylamino)uracil with 3,4-dihydroxy-2-butanone 4-phosphate. This is the penultimate step in the biosynthesis of riboflavin. This chain is 6,7-dimethyl-8-ribityllumazine synthase, found in Afipia carboxidovorans (strain ATCC 49405 / DSM 1227 / KCTC 32145 / OM5) (Oligotropha carboxidovorans).